The chain runs to 335 residues: Fructose-1,6-bisphosphatase class 1 (335 aa).

4 residues coordinate Mg(2+): glutamate 94, aspartate 113, leucine 115, and aspartate 116. Substrate is bound by residues 116–119, asparagine 208, and lysine 274; that span reads DGSS. Glutamate 280 contributes to the Mg(2+) binding site.

Belongs to the FBPase class 1 family. In terms of assembly, homotetramer. It depends on Mg(2+) as a cofactor.

It is found in the cytoplasm. It catalyses the reaction beta-D-fructose 1,6-bisphosphate + H2O = beta-D-fructose 6-phosphate + phosphate. Its pathway is carbohydrate biosynthesis; gluconeogenesis. This chain is Fructose-1,6-bisphosphatase class 1, found in Polynucleobacter asymbioticus (strain DSM 18221 / CIP 109841 / QLW-P1DMWA-1) (Polynucleobacter necessarius subsp. asymbioticus).